The following is a 254-amino-acid chain: Low affinity immunoglobulin gamma Fc region receptor III-A (254 aa).

An N-terminal signal peptide occupies residues 1 to 16 (MWQLLLPTALLLLVSA). Residues 17 to 208 (GMRAEDLPKA…ISSFFPPGYQ (192 aa)) lie on the Extracellular side of the membrane. Ig-like C2-type domains follow at residues 24-105 (PKAV…LEVH) and 107-189 (GWLL…VNIT). Disulfide bonds link C47–C89 and C128–C172. N-linked (GlcNAc...) asparagine glycosylation is found at N56, N63, and N82. N-linked (GlcNAc...) asparagine glycans are attached at residues N180 and N187. A helical transmembrane segment spans residues 209–229 (VSFCLVMVLLFAVDTGLYFSM). Residues 230–254 (KKSIPSSTRDWEDHKFKWSKDPQDK) lie on the Cytoplasmic side of the membrane.

As to quaternary structure, forms a heterooligomeric complex with ITAM-containing signaling subunits, either a homodimer of CD247, a homodimer of FCER1G or a heterodimer of CD247 and FCER1G. Interacts (via transmembrane domain) with signaling subunits; this interaction is a prerequisite for receptor complex expression on the cell surface and intracellular signal transduction. Binds the Fc region of antigen-complexed IgG with a preference for IgG1 and IgG3 isotypes. Interacts with CD2; this interaction is involved in NK cell activation and cytotoxicity. Interacts with S100A4; this interaction inhibits PKC-dependent phosphorylation of FCGR3A. Post-translationally, glycosylated. Glycosylation plays an inhibitory role in the interaction with IgG1 and IgG2. In terms of processing, undergoes rapid ectodomain shedding upon NK cell stimulation. The soluble form is produced by a proteolytic cleavage mediated by ADAM17. Repeated stimulation causes receptor shedding, a mechanism that allows for increased NK cell motility and detachment from opsonized target cells while avoiding activation-induced NK cell apoptosis. Lymphocytes and monocytes.

Its subcellular location is the cell membrane. The protein resides in the secreted. Its function is as follows. Receptor for the invariable Fc fragment of immunoglobulin gamma (IgG). Optimally activated upon binding of clustered antigen-IgG complexes displayed on cell surfaces, triggers lysis of antibody-coated cells, a process known as antibody-dependent cellular cytotoxicity (ADCC). Does not bind free monomeric IgG, thus avoiding inappropriate effector cell activation in the absence of antigenic trigger. Mediates IgG effector functions on natural killer (NK) cells. Binds antigen-IgG complexes generated upon infection and triggers NK cell-dependent cytokine production and degranulation to limit viral load and propagation. Involved in the generation of memory-like adaptive NK cells capable to produce high amounts of IFNG and to efficiently eliminate virus-infected cells via ADCC. Regulates NK cell survival and proliferation, in particular by preventing NK cell progenitor apoptosis. Fc-binding subunit that associates with CD247 and/or FCER1G adapters to form functional signaling complexes. Following the engagement of antigen-IgG complexes, triggers phosphorylation of immunoreceptor tyrosine-based activation motif (ITAM)-containing adapters with subsequent activation of phosphatidylinositol 3-kinase signaling and sustained elevation of intracellular calcium that ultimately drive NK cell activation. The ITAM-dependent signaling coupled to receptor phosphorylation by PKC mediates robust intracellular calcium flux that leads to production of pro-inflammatory cytokines, whereas in the absence of receptor phosphorylation it mainly activates phosphatidylinositol 3-kinase signaling leading to cell degranulation. Costimulates NK cells and trigger lysis of target cells independently of IgG binding. Mediates the antitumor activities of therapeutic antibodies. Upon ligation on monocytes triggers TNFA-dependent ADCC of IgG-coated tumor cells. Mediates enhanced ADCC in response to afucosylated IgGs. This is Low affinity immunoglobulin gamma Fc region receptor III-A (FCGR3A) from Macaca fascicularis (Crab-eating macaque).